The following is a 463-amino-acid chain: Glucagon-like peptide 1 receptor (463 aa).

The first 21 residues, methionine 1 to alanine 21, serve as a signal peptide directing secretion. Topologically, residues glycine 22 to glutamate 139 are extracellular. Disulfide bonds link cysteine 46–cysteine 71, cysteine 62–cysteine 104, and cysteine 85–cysteine 126. 3 N-linked (GlcNAc...) asparagine glycosylation sites follow: asparagine 63, asparagine 82, and asparagine 115. A helical transmembrane segment spans residues glutamine 140–alanine 164. At isoleucine 165 to threonine 175 the chain is on the cytoplasmic side. The helical transmembrane segment at arginine 176–leucine 201 threads the bilayer. At lysine 202–arginine 227 the chain is on the extracellular side. Cysteine 226 and cysteine 296 are oxidised to a cystine. Residues leucine 228–leucine 251 form a helical membrane-spanning segment. At tyrosine 252–isoleucine 265 the chain is on the cytoplasmic side. Residues phenylalanine 266–leucine 290 form a helical membrane-spanning segment. Over tyrosine 291–tyrosine 305 the chain is Extracellular. The chain crosses the membrane as a helical span at residues tryptophan 306–isoleucine 328. Residues cysteine 329–arginine 348 are Cytoplasmic-facing. Cysteine 341 carries the ADP-ribosylcysteine modification. Arginine 348 is modified (ADP-ribosylarginine). Residues leucine 349–valine 370 form a helical membrane-spanning segment. The interval serine 352 to threonine 355 is important for allosteric inhibitor binding. At methionine 371–lysine 383 the chain is on the extracellular side. The chain crosses the membrane as a helical span at residues leucine 384–phenylalanine 404. Residues valine 405 to serine 463 lie on the Cytoplasmic side of the membrane.

It belongs to the G-protein coupled receptor 2 family. As to quaternary structure, may form homodimers and heterodimers with GIPR. In terms of processing, N-glycosylation enhances cell surface expression and lengthens receptor half-life by preventing degradation in the ER. Detected in pancreatic islets (at protein level). Detected in pancreatic islets and lungs.

It localises to the cell membrane. Its function is as follows. G-protein coupled receptor for glucagon-like peptide 1 (GLP-1). Ligand binding triggers activation of a signaling cascade that leads to the activation of adenylyl cyclase and increased intracellular cAMP levels. Plays a role in regulating insulin secretion in response to GLP-1. The protein is Glucagon-like peptide 1 receptor (Glp1r) of Mus musculus (Mouse).